Here is a 169-residue protein sequence, read N- to C-terminus: uncharacterized protein (169 aa).

This is an uncharacterized protein from Escherichia coli (strain K12).